The following is a 252-amino-acid chain: TLC domain-containing protein 1 (252 aa).

The signal sequence occupies residues 1–29 (MGPGWRAPSAALVGGSVALFGALRRAALA). Residues 30 to 47 (LPRPAAVRSRPGRVWRWR) lie on the Extracellular side of the membrane. The 195-residue stretch at 41 to 235 (GRVWRWRNLL…LLRSDFFPSL (195 aa)) folds into the TLC domain. The helical transmembrane segment at 48–68 (NLLVSFAHSVLAGLWALFSLW) threads the bilayer. At 69–84 (QSPELLSDIQDGYSVS) the chain is on the cytoplasmic side. A helical membrane pass occupies residues 85 to 105 (GHLLVCFSSGYFIHDSLDIIF). The Extracellular segment spans residues 106 to 124 (NQQSRSSWEYLVHHAMAIS). The segment at residues 125–145 (AFVSLIITGRFLVAAMLLLLV) is an intramembrane region (helical). At 146 to 174 (EVSNIFLTIRMLLKMSNVPSPALYEANKY) the chain is on the extracellular side. The chain crosses the membrane as a helical span at residues 175–195 (VNLVMYFAFRLAPQVYLTWYF). Over 196 to 202 (VRYVEVQ) the chain is Cytoplasmic. Residues 203–223 (GQGAFLMANLLLLDAMILMYF) traverse the membrane as a helical segment. Topologically, residues 224-252 (SRLLRSDFFPSLRKGSVGRDVDGEKFLID) are extracellular.

In terms of assembly, interacts with CACNA1C in vitro; however the relevance of the interaction in vivo is unclear.

It localises to the cell membrane. Functionally, regulates the composition and fluidity of the plasma membrane. Inhibits the incorporation of membrane-fluidizing phospholipids containing omega-3 long-chain polyunsaturated fatty acids (LCPUFA) and thereby promotes membrane rigidity. Does not appear to have any effect on LCPUFA synthesis. The sequence is that of TLC domain-containing protein 1 (TLCD1) from Gallus gallus (Chicken).